The chain runs to 485 residues: Zinc finger protein 577 (485 aa).

Residues 1–21 are disordered; that stretch reads MKNATIVMSVRREQGSSSGEG. The KRAB domain maps to 23 to 94; the sequence is LSFEDVAVGF…EGAAHSQICP (72 aa). The segment at 158–180 adopts a C2H2-type 1; degenerate zinc-finger fold; sequence HECSVCGRAFSRKAQLIQHQRTE. 7 C2H2-type zinc fingers span residues 186-208, 214-236, 242-264, 270-292, 298-320, 326-348, and 354-376; these read HGCG…QRTH, HECS…QRTH, YRCS…QRSH, YGCS…QRLH, YKCS…QRIH, YECS…QRTH, and YSCR…EKTH.

Belongs to the krueppel C2H2-type zinc-finger protein family.

The protein resides in the nucleus. May be involved in transcriptional regulation. The chain is Zinc finger protein 577 (ZNF577) from Homo sapiens (Human).